The sequence spans 580 residues: Alpha-glucosidase (580 aa).

The first 19 residues, 1-19 (MRPLGALSLFALLATTVSG), serve as a signal peptide directing secretion. Asparagine 102 and asparagine 127 each carry an N-linked (GlcNAc...) asparagine glycan. Aspartate 224 acts as the Nucleophile in catalysis. Glutamate 290 acts as the Proton donor in catalysis. A glycan (N-linked (GlcNAc...) asparagine) is linked at asparagine 501. Residues 560-580 (AAAINLSIGLLLAIMARYIFV) form a helical membrane-spanning segment.

This sequence belongs to the glycosyl hydrolase 13 family. In terms of assembly, (Microbial infection) Binds to L.sphaericus BinB subunit of the binary toxin BinAB. As to expression, in 4th-instar larvae produced in the brush border membranes of the gastric caeca and the posterior stomach cells (at protein level).

It localises to the membrane. The enzyme catalyses Hydrolysis of terminal, non-reducing (1-&gt;4)-linked alpha-D-glucose residues with release of alpha-D-glucose.. Functionally, probably an alpha-glucosidase, it has no alpha-amylase function. (Microbial infection) Serves as the larval receptor for Lysinibacillus sphaericus BinB toxin. This chain is Alpha-glucosidase, found in Culex pipiens (House mosquito).